The sequence spans 219 residues: Proteasome subunit beta (219 aa).

The propeptide at 1–14 (MISGSEYHKEYMKG) is removed in mature form; by autocatalysis. Thr-15 serves as the catalytic Nucleophile.

The protein belongs to the peptidase T1B family. In terms of assembly, the 20S proteasome core is composed of 14 alpha and 14 beta subunits that assemble into four stacked heptameric rings, resulting in a barrel-shaped structure. The two inner rings, each composed of seven catalytic beta subunits, are sandwiched by two outer rings, each composed of seven alpha subunits. The catalytic chamber with the active sites is on the inside of the barrel. Has a gated structure, the ends of the cylinder being occluded by the N-termini of the alpha-subunits. Is capped at one or both ends by the proteasome regulatory ATPase, PAN.

The protein resides in the cytoplasm. The enzyme catalyses Cleavage of peptide bonds with very broad specificity.. With respect to regulation, the formation of the proteasomal ATPase PAN-20S proteasome complex, via the docking of the C-termini of PAN into the intersubunit pockets in the alpha-rings, triggers opening of the gate for substrate entry. Interconversion between the open-gate and close-gate conformations leads to a dynamic regulation of the 20S proteasome proteolysis activity. In terms of biological role, component of the proteasome core, a large protease complex with broad specificity involved in protein degradation. This is Proteasome subunit beta from Methanococcus vannielii (strain ATCC 35089 / DSM 1224 / JCM 13029 / OCM 148 / SB).